Here is a 295-residue protein sequence, read N- to C-terminus: Acetylglutamate kinase (295 aa).

Residues 64 to 65 (GG), R86, and N190 each bind substrate.

This sequence belongs to the acetylglutamate kinase family. ArgB subfamily.

It is found in the cytoplasm. It carries out the reaction N-acetyl-L-glutamate + ATP = N-acetyl-L-glutamyl 5-phosphate + ADP. The protein operates within amino-acid biosynthesis; L-arginine biosynthesis; N(2)-acetyl-L-ornithine from L-glutamate: step 2/4. In terms of biological role, catalyzes the ATP-dependent phosphorylation of N-acetyl-L-glutamate. This is Acetylglutamate kinase from Heliobacterium modesticaldum (strain ATCC 51547 / Ice1).